A 148-amino-acid chain; its full sequence is uncharacterized protein (148 aa).

Residues 1 to 17 (MCPPVRQRPAQAPPAKR) show a composition bias toward low complexity. Disordered regions lie at residues 1-86 (MCPP…VQSP) and 122-148 (RAHR…TSPC). Residues 38–57 (RPPKMQRRPRPPVAKRRRFP) are compositionally biased toward basic residues. Residues 137–148 (QRPSPDSQTSPC) show a composition bias toward polar residues.

Belongs to the Epstein-Barr virus BLLF2 family.

This is an uncharacterized protein from Epstein-Barr virus (strain AG876) (HHV-4).